Reading from the N-terminus, the 284-residue chain is GPN-loop GTPase 3 (284 aa).

Residue 13-18 participates in GTP binding; the sequence is GSGKST. Positions 72-74 match the Gly-Pro-Asn (GPN)-loop; involved in dimer interface motif; it reads GPN. 174-177 provides a ligand contact to GTP; it reads TKMD. Residues 261 to 284 form a disordered region; it reads KEPKEHEDESSSMFDEYFQEHQNE.

The protein belongs to the GPN-loop GTPase family. In terms of assembly, heterodimer with GPN1. Binds to RNA polymerase II (RNAPII). Interacts directly with subunits RPB4 and RPB7 and the CTD of RPB1.

Functionally, small GTPase required for proper localization of RNA polymerase II (RNAPII). May act at an RNAP assembly step prior to nuclear import. This Bos taurus (Bovine) protein is GPN-loop GTPase 3.